The chain runs to 953 residues: Probable isoleucine--tRNA ligase, cytoplasmic (953 aa).

The 'HIGH' region signature appears at 45–55 (PFATGLPHYGH). Residues 634–638 (KMSKR) carry the 'KMSKS' region motif. Lys-637 lines the ATP pocket.

This sequence belongs to the class-I aminoacyl-tRNA synthetase family.

The protein resides in the cytoplasm. It catalyses the reaction tRNA(Ile) + L-isoleucine + ATP = L-isoleucyl-tRNA(Ile) + AMP + diphosphate. This chain is Probable isoleucine--tRNA ligase, cytoplasmic, found in Enterocytozoon bieneusi (strain H348) (Microsporidian parasite).